Reading from the N-terminus, the 116-residue chain is Large ribosomal subunit protein uL23 (116 aa).

Belongs to the universal ribosomal protein uL23 family. As to quaternary structure, part of the 50S ribosomal subunit. Contacts protein L29, and trigger factor when it is bound to the ribosome.

Functionally, one of the early assembly proteins it binds 23S rRNA. One of the proteins that surrounds the polypeptide exit tunnel on the outside of the ribosome. Forms the main docking site for trigger factor binding to the ribosome. This chain is Large ribosomal subunit protein uL23, found in Psychrobacter sp. (strain PRwf-1).